The primary structure comprises 955 residues: Glycine dehydrogenase (decarboxylating) (955 aa).

K702 carries the N6-(pyridoxal phosphate)lysine modification.

It belongs to the GcvP family. In terms of assembly, the glycine cleavage system is composed of four proteins: P, T, L and H. Pyridoxal 5'-phosphate serves as cofactor.

It carries out the reaction N(6)-[(R)-lipoyl]-L-lysyl-[glycine-cleavage complex H protein] + glycine + H(+) = N(6)-[(R)-S(8)-aminomethyldihydrolipoyl]-L-lysyl-[glycine-cleavage complex H protein] + CO2. The glycine cleavage system catalyzes the degradation of glycine. The P protein binds the alpha-amino group of glycine through its pyridoxal phosphate cofactor; CO(2) is released and the remaining methylamine moiety is then transferred to the lipoamide cofactor of the H protein. In Bordetella avium (strain 197N), this protein is Glycine dehydrogenase (decarboxylating).